Consider the following 249-residue polypeptide: 2,3-bisphosphoglycerate-dependent phosphoglycerate mutase (249 aa).

Substrate contacts are provided by residues 8–15 (RHGESVWN), 21–22 (TG), Arg-60, 87–90 (ERHY), Lys-98, 114–115 (RR), and 183–184 (GN). His-9 (tele-phosphohistidine intermediate) is an active-site residue. Residue Glu-87 is the Proton donor/acceptor of the active site.

Belongs to the phosphoglycerate mutase family. BPG-dependent PGAM subfamily.

The catalysed reaction is (2R)-2-phosphoglycerate = (2R)-3-phosphoglycerate. It functions in the pathway carbohydrate degradation; glycolysis; pyruvate from D-glyceraldehyde 3-phosphate: step 3/5. Functionally, catalyzes the interconversion of 2-phosphoglycerate and 3-phosphoglycerate. The sequence is that of 2,3-bisphosphoglycerate-dependent phosphoglycerate mutase from Endomicrobium trichonymphae.